The sequence spans 82 residues: Exodeoxyribonuclease 7 small subunit (82 aa).

The protein belongs to the XseB family. As to quaternary structure, heterooligomer composed of large and small subunits.

The protein resides in the cytoplasm. It carries out the reaction Exonucleolytic cleavage in either 5'- to 3'- or 3'- to 5'-direction to yield nucleoside 5'-phosphates.. Its function is as follows. Bidirectionally degrades single-stranded DNA into large acid-insoluble oligonucleotides, which are then degraded further into small acid-soluble oligonucleotides. The polypeptide is Exodeoxyribonuclease 7 small subunit (Pectobacterium carotovorum subsp. carotovorum (strain PC1)).